The chain runs to 147 residues: Insertion element IS402 uncharacterized 16.2 kDa protein (147 aa).

The segment at 106 to 147 (DSSSIRAVGAGQKLGQTPPIARDPVPSTTSSPTPTVRRSPRS) is disordered. Residues 129–147 (PVPSTTSSPTPTVRRSPRS) are compositionally biased toward low complexity.

The protein belongs to the transposase 6 family.

The polypeptide is Insertion element IS402 uncharacterized 16.2 kDa protein (Burkholderia cepacia (Pseudomonas cepacia)).